A 620-amino-acid polypeptide reads, in one-letter code: Chaperone protein HtpG (620 aa).

Positions 1–334 (MTTTDTAPQT…SEDLPLNLSR (334 aa)) are a; substrate-binding. A b region spans residues 335 to 548 (EMLQNNPQLV…GQGPDRALER (214 aa)). Residues 549–620 (MLAQQNRGGA…RINRLVLRAL (72 aa)) are c.

Belongs to the heat shock protein 90 family. Homodimer.

Its subcellular location is the cytoplasm. Molecular chaperone. Has ATPase activity. The protein is Chaperone protein HtpG of Rhodopseudomonas palustris (strain BisA53).